A 332-amino-acid chain; its full sequence is L-lactate dehydrogenase A chain (332 aa).

NAD(+)-binding positions include 29–57 and Arg99; that span reads GMVG…MEDK. 3 residues coordinate substrate: Arg106, Asn138, and Arg169. Asn138 is a binding site for NAD(+). The Proton acceptor role is filled by His193. Thr248 serves as a coordination point for substrate.

The protein belongs to the LDH/MDH superfamily. LDH family. As to quaternary structure, homotetramer.

It localises to the cytoplasm. It carries out the reaction (S)-lactate + NAD(+) = pyruvate + NADH + H(+). It functions in the pathway fermentation; pyruvate fermentation to lactate; (S)-lactate from pyruvate: step 1/1. In terms of biological role, interconverts simultaneously and stereospecifically pyruvate and lactate with concomitant interconversion of NADH and NAD(+). The chain is L-lactate dehydrogenase A chain (ldha) from Sphyraena argentea (Pacific barracuda).